The following is a 794-amino-acid chain: Copper-exporting P-type ATPase (794 aa).

2 consecutive HMA domains span residues 5-70 and 72-138; these read KKTT…YGVL and ETAE…YDAQ. Cu(+)-binding residues include cysteine 16, cysteine 19, cysteine 83, and cysteine 86. The next 6 membrane-spanning stretches (helical) occupy residues 162–182, 187–207, 224–244, 250–270, 411–431, and 438–458; these read IISA…LFGI, IFMN…IIGW, MDVL…YEMV, ANVM…LILF, YFVP…IAFV, and PALV…LGLA. Aspartate 495 (4-aspartylphosphate intermediate) is an active-site residue. 2 residues coordinate Mg(2+): aspartate 689 and aspartate 693. 2 helical membrane passes run 747 to 766 and 770 to 789; these read LFWA…LGLL and IAGA…ALRL.

The protein belongs to the cation transport ATPase (P-type) (TC 3.A.3) family. Type IB subfamily.

It is found in the cell membrane. It carries out the reaction Cu(+)(in) + ATP + H2O = Cu(+)(out) + ADP + phosphate + H(+). Its function is as follows. Involved in copper export. The chain is Copper-exporting P-type ATPase (copA) from Staphylococcus saprophyticus subsp. saprophyticus (strain ATCC 15305 / DSM 20229 / NCIMB 8711 / NCTC 7292 / S-41).